The chain runs to 347 residues: Quinolinate synthase (347 aa).

The iminosuccinate site is built by His-47 and Ser-68. Cys-113 lines the [4Fe-4S] cluster pocket. Residues Tyr-139–Asn-141 and Ser-156 each bind iminosuccinate. Cys-200 is a [4Fe-4S] cluster binding site. Residues His-226–Glu-228 and Thr-243 contribute to the iminosuccinate site. Cys-297 contributes to the [4Fe-4S] cluster binding site.

It belongs to the quinolinate synthase family. Type 1 subfamily. It depends on [4Fe-4S] cluster as a cofactor.

Its subcellular location is the cytoplasm. It catalyses the reaction iminosuccinate + dihydroxyacetone phosphate = quinolinate + phosphate + 2 H2O + H(+). It functions in the pathway cofactor biosynthesis; NAD(+) biosynthesis; quinolinate from iminoaspartate: step 1/1. In terms of biological role, catalyzes the condensation of iminoaspartate with dihydroxyacetone phosphate to form quinolinate. The chain is Quinolinate synthase from Escherichia coli O7:K1 (strain IAI39 / ExPEC).